The following is a 515-amino-acid chain: ATP synthase subunit alpha (515 aa).

Position 169-176 (169-176) interacts with ATP; it reads GDRQTGKT.

This sequence belongs to the ATPase alpha/beta chains family. In terms of assembly, F-type ATPases have 2 components, CF(1) - the catalytic core - and CF(0) - the membrane proton channel. CF(1) has five subunits: alpha(3), beta(3), gamma(1), delta(1), epsilon(1). CF(0) has three main subunits: a(1), b(2) and c(9-12). The alpha and beta chains form an alternating ring which encloses part of the gamma chain. CF(1) is attached to CF(0) by a central stalk formed by the gamma and epsilon chains, while a peripheral stalk is formed by the delta and b chains.

The protein resides in the cell inner membrane. The enzyme catalyses ATP + H2O + 4 H(+)(in) = ADP + phosphate + 5 H(+)(out). In terms of biological role, produces ATP from ADP in the presence of a proton gradient across the membrane. The alpha chain is a regulatory subunit. The sequence is that of ATP synthase subunit alpha from Myxococcus xanthus.